A 107-amino-acid chain; its full sequence is Cell division protein FtsB (107 aa).

Residues Met1–Lys3 are Cytoplasmic-facing. Residues Leu4–Leu21 traverse the membrane as a helical segment. The Periplasmic segment spans residues Gly22–Gln107. Residues Gln39–Gly62 are a coiled coil.

This sequence belongs to the FtsB family. Part of a complex composed of FtsB, FtsL and FtsQ.

Its subcellular location is the cell inner membrane. Its function is as follows. Essential cell division protein. May link together the upstream cell division proteins, which are predominantly cytoplasmic, with the downstream cell division proteins, which are predominantly periplasmic. In Yersinia enterocolitica serotype O:8 / biotype 1B (strain NCTC 13174 / 8081), this protein is Cell division protein FtsB.